We begin with the raw amino-acid sequence, 1083 residues long: Ubiquitin-protein ligase E3C (1083 aa).

Basic and acidic residues-rich tracts occupy residues Met1 to Thr10 and Ser20 to Glu40. Residues Met1–Glu40 form a disordered region. A cis-determinant of acceptor ubiquitin-binding region spans residues Met1–Arg60. Residues Arg45–Asp74 form the IQ domain. The disordered stretch occupies residues Ser355 to Arg385. Residues Ala375–Arg385 show a composition bias toward basic and acidic residues. Residues Asn744 to Ser1083 form the HECT domain. Lys903 is covalently cross-linked (Glycyl lysine isopeptide (Lys-Gly) (interchain with G-Cter in ubiquitin); by autocatalysis). The active-site Glycyl thioester intermediate is the Cys1051.

Belongs to the UBE3C family. As to quaternary structure, interacts with 26S proteasomes. Interacts (via the HECT domain) with UBE2D1 and, less efficiently, with UBE2L3. Post-translationally, autoubiquitinated; promoting its own degradation. As to expression, highly expressed in skeletal muscle. Detected at much lower levels in kidney and pancreas.

It carries out the reaction S-ubiquitinyl-[E2 ubiquitin-conjugating enzyme]-L-cysteine + [acceptor protein]-L-lysine = [E2 ubiquitin-conjugating enzyme]-L-cysteine + N(6)-ubiquitinyl-[acceptor protein]-L-lysine.. Its pathway is protein modification; protein ubiquitination. Functionally, E3 ubiquitin-protein ligase that specifically catalyzes 'Lys-29'- and 'Lys-48'-linked polyubiquitin chains. Accepts ubiquitin from the E2 ubiquitin-conjugating enzyme UBE2D1 in the form of a thioester and then directly transfers the ubiquitin to targeted substrates. Associates with the proteasome and promotes elongation of ubiquitin chains on substrates bound to the 26S proteasome. Also catalyzes 'Lys-29'- and 'Lys-48'-linked ubiquitination of 26S proteasome subunit ADRM1/RPN13 in response to proteotoxic stress, impairing the ability of the proteasome to bind and degrade ubiquitin-conjugated proteins. Acts as a negative regulator of autophagy by mediating 'Lys-29'- and 'Lys-48'-linked ubiquitination of PIK3C3/VPS34, promoting its degradation. Can assemble unanchored poly-ubiquitin chains in either 'Lys-29'- or 'Lys-48'-linked polyubiquitin chains; with some preference for 'Lys-48' linkages. Acts as a negative regulator of type I interferon by mediating 'Lys-48'-linked ubiquitination of IRF3 and IRF7, leading to their degradation by the proteasome. Catalyzes ubiquitination and degradation of CAND2. The protein is Ubiquitin-protein ligase E3C of Homo sapiens (Human).